The sequence spans 345 residues: Dihydroorotase (345 aa).

Residues His13 and His15 each coordinate Zn(2+). Substrate-binding positions include 15–17 (HFR) and Asn41. Zn(2+) is bound by residues Lys98, His135, and His173. N6-carboxylysine is present on Lys98. His135 contacts substrate. Leu218 is a substrate binding site. Asp246 contacts Zn(2+). Asp246 is an active-site residue. 2 residues coordinate substrate: His250 and Ala262.

The protein belongs to the metallo-dependent hydrolases superfamily. DHOase family. Class II DHOase subfamily. Homodimer. Zn(2+) is required as a cofactor.

It catalyses the reaction (S)-dihydroorotate + H2O = N-carbamoyl-L-aspartate + H(+). The protein operates within pyrimidine metabolism; UMP biosynthesis via de novo pathway; (S)-dihydroorotate from bicarbonate: step 3/3. In terms of biological role, catalyzes the reversible cyclization of carbamoyl aspartate to dihydroorotate. The polypeptide is Dihydroorotase (Shewanella frigidimarina (strain NCIMB 400)).